A 500-amino-acid polypeptide reads, in one-letter code: Probable cytosol aminopeptidase (500 aa).

Mn(2+)-binding residues include lysine 268 and aspartate 273. Lysine 280 is an active-site residue. Positions 291, 350, and 352 each coordinate Mn(2+). Residue arginine 354 is part of the active site.

This sequence belongs to the peptidase M17 family. Mn(2+) serves as cofactor.

The protein localises to the cytoplasm. It catalyses the reaction Release of an N-terminal amino acid, Xaa-|-Yaa-, in which Xaa is preferably Leu, but may be other amino acids including Pro although not Arg or Lys, and Yaa may be Pro. Amino acid amides and methyl esters are also readily hydrolyzed, but rates on arylamides are exceedingly low.. The catalysed reaction is Release of an N-terminal amino acid, preferentially leucine, but not glutamic or aspartic acids.. Functionally, presumably involved in the processing and regular turnover of intracellular proteins. Catalyzes the removal of unsubstituted N-terminal amino acids from various peptides. The polypeptide is Probable cytosol aminopeptidase (Baumannia cicadellinicola subsp. Homalodisca coagulata).